The chain runs to 379 residues: Protein psi1 (379 aa).

A J domain is found at 1–70 (MVADTKLYDC…RKLYDQYGIT (70 aa)). Disordered stretches follow at residues 69–95 (ITEGNAAPPPPGAEGGPGAGFGGFPGA) and 176–205 (FGGGGAGPHARRSHPSFGGSRPSQPPAQNE). The segment covering 81–95 (AEGGPGAGFGGFPGA) has biased composition (gly residues).

Required for nuclear migration during mitosis. It is required for the normal initiation of translation. The sequence is that of Protein psi1 (psi1) from Schizosaccharomyces pombe (strain 972 / ATCC 24843) (Fission yeast).